Here is a 232-residue protein sequence, read N- to C-terminus: Lipoprotein-releasing system ATP-binding protein LolD (232 aa).

Residues 11–231 (VYLHDIKREY…SLENGHVVEL (221 aa)) form the ABC transporter domain. ATP is bound at residue 47–54 (APSGSGKS).

Belongs to the ABC transporter superfamily. Lipoprotein translocase (TC 3.A.1.125) family. As to quaternary structure, the complex is composed of two ATP-binding proteins (LolD) and two transmembrane proteins (LolC and LolE).

It is found in the cell inner membrane. Functionally, part of the ABC transporter complex LolCDE involved in the translocation of mature outer membrane-directed lipoproteins, from the inner membrane to the periplasmic chaperone, LolA. Responsible for the formation of the LolA-lipoprotein complex in an ATP-dependent manner. This Nitrobacter winogradskyi (strain ATCC 25391 / DSM 10237 / CIP 104748 / NCIMB 11846 / Nb-255) protein is Lipoprotein-releasing system ATP-binding protein LolD.